An 89-amino-acid polypeptide reads, in one-letter code: MALLDFFLSRKKTTANIAKERLQIIVAERRRGDNEPHYLPQLKRDILEVICRYVQIDPEMVTVQLEQKGDDISVLELNVTLPEAEETPK.

Belongs to the MinE family.

Its function is as follows. Prevents the cell division inhibition by proteins MinC and MinD at internal division sites while permitting inhibition at polar sites. This ensures cell division at the proper site by restricting the formation of a division septum at the midpoint of the long axis of the cell. This chain is Cell division topological specificity factor, found in Pectobacterium atrosepticum (strain SCRI 1043 / ATCC BAA-672) (Erwinia carotovora subsp. atroseptica).